Here is a 634-residue protein sequence, read N- to C-terminus: TATA box-binding protein-associated factor RNA polymerase I subunit B (634 aa).

The segment at Leu-19–Ser-51 adopts an RRN7-type zinc-finger fold. Zn(2+) contacts are provided by Cys-21, Cys-24, Cys-42, and Cys-45. The B-reader stretch occupies residues Ser-51–Pro-80. The tract at residues Ala-56–Asn-117 is disordered. The span at Gln-77–Ala-87 shows a compositional bias: pro residues. A B-linker region spans residues Thr-81–Lys-83. Residues Pro-84–Asp-281 are N-terminal cyclin fold. Low complexity predominate over residues Pro-88–Pro-98. Positions Cys-282–Leu-284 are C-terminal cyclin fold.

It belongs to the RRN7/TAF1B family.

It is found in the nucleus. The protein resides in the nucleolus. Functionally, component of RNA polymerase I core factor complex that acts as a GTF2B/TFIIB-like factor and plays a key role in multiple steps during transcription initiation such as pre-initiation complex (PIC) assembly and postpolymerase recruitment events in polymerase I (Pol I) transcription. Binds rDNA promoters and plays a role in Pol I recruitment. The protein is TATA box-binding protein-associated factor RNA polymerase I subunit B of Oryza sativa subsp. indica (Rice).